We begin with the raw amino-acid sequence, 354 residues long: Uroporphyrinogen decarboxylase (354 aa).

Substrate contacts are provided by residues arginine 30–arginine 34, aspartate 79, tyrosine 154, serine 209, and histidine 333.

The protein belongs to the uroporphyrinogen decarboxylase family. Homodimer.

Its subcellular location is the cytoplasm. It carries out the reaction uroporphyrinogen III + 4 H(+) = coproporphyrinogen III + 4 CO2. It participates in porphyrin-containing compound metabolism; protoporphyrin-IX biosynthesis; coproporphyrinogen-III from 5-aminolevulinate: step 4/4. Its function is as follows. Catalyzes the decarboxylation of four acetate groups of uroporphyrinogen-III to yield coproporphyrinogen-III. The polypeptide is Uroporphyrinogen decarboxylase (Mycobacterium sp. (strain JLS)).